The chain runs to 416 residues: MQITILGSGVIGVTTAYYLAKLGHEVTVIDREEGPAPETSFANAGQVSPGYASPWAAPSIPLKAAKWLFQKHAPLILRLTTDPVQYRWLLQMLANCTDSRYKINKTRMVRVAEYSRDCLIELRKDTGIEYDQRSQGTLQLFREQYQLDGIGKDIEVLRQDGVPFEVLDRDGCVNVEPALAHAKDKFVGGLRLPNDETGDCFKFTNALAKIAEGLGVKFRFGVNIKSLLMSGGKISGVETSEGIVTAERYVVALGSYTPALIKALGLNAPIYPVKGYSITAPIVDESRAPVSTVLDESYKIAITRLGDRIRVGGMAEVSGFTDDLPAARRATLDLSVTDLFPGGDLKAATFWSGLRPMTPDSTPIIGGTRYDNLFINAGHGTLGWTMACGSGRLLADLISGNKADIRADDLGIARYN.

3–17 (ITILGSGVIGVTTAY) lines the FAD pocket.

This sequence belongs to the DadA oxidoreductase family. FAD is required as a cofactor.

It carries out the reaction a D-alpha-amino acid + A + H2O = a 2-oxocarboxylate + AH2 + NH4(+). It participates in amino-acid degradation; D-alanine degradation; NH(3) and pyruvate from D-alanine: step 1/1. Functionally, oxidative deamination of D-amino acids. The polypeptide is D-amino acid dehydrogenase (Brucella canis (strain ATCC 23365 / NCTC 10854 / RM-666)).